The chain runs to 576 residues: Lysine--tRNA ligase (576 aa).

Residues glutamate 412 and glutamate 419 each contribute to the Mg(2+) site.

The protein belongs to the class-II aminoacyl-tRNA synthetase family. As to quaternary structure, homodimer. Mg(2+) is required as a cofactor.

The protein resides in the cytoplasm. It carries out the reaction tRNA(Lys) + L-lysine + ATP = L-lysyl-tRNA(Lys) + AMP + diphosphate. The chain is Lysine--tRNA ligase from Parabacteroides distasonis (strain ATCC 8503 / DSM 20701 / CIP 104284 / JCM 5825 / NCTC 11152).